The primary structure comprises 173 residues: Dual-action ribosomal maturation protein DarP (173 aa).

Belongs to the DarP family.

It is found in the cytoplasm. Member of a network of 50S ribosomal subunit biogenesis factors which assembles along the 30S-50S interface, preventing incorrect 23S rRNA structures from forming. Promotes peptidyl transferase center (PTC) maturation. The polypeptide is Dual-action ribosomal maturation protein DarP (Pseudomonas entomophila (strain L48)).